The following is a 226-amino-acid chain: Thymidylate kinase (226 aa).

20 to 27 contributes to the ATP binding site; the sequence is GGEGAGKS.

It belongs to the thymidylate kinase family.

The enzyme catalyses dTMP + ATP = dTDP + ADP. Functionally, phosphorylation of dTMP to form dTDP in both de novo and salvage pathways of dTTP synthesis. The protein is Thymidylate kinase of Bradyrhizobium sp. (strain ORS 278).